A 343-amino-acid chain; its full sequence is Aspartate carbamoyltransferase catalytic subunit (343 aa).

The carbamoyl phosphate site is built by Arg91 and Thr92. Lys119 contacts L-aspartate. Carbamoyl phosphate contacts are provided by Arg141, His171, and Gln174. The L-aspartate site is built by Arg204 and Arg259. Carbamoyl phosphate contacts are provided by Gly300 and Pro301.

It belongs to the aspartate/ornithine carbamoyltransferase superfamily. ATCase family. In terms of assembly, heterododecamer (2C3:3R2) of six catalytic PyrB chains organized as two trimers (C3), and six regulatory PyrI chains organized as three dimers (R2).

It catalyses the reaction carbamoyl phosphate + L-aspartate = N-carbamoyl-L-aspartate + phosphate + H(+). Its pathway is pyrimidine metabolism; UMP biosynthesis via de novo pathway; (S)-dihydroorotate from bicarbonate: step 2/3. Functionally, catalyzes the condensation of carbamoyl phosphate and aspartate to form carbamoyl aspartate and inorganic phosphate, the committed step in the de novo pyrimidine nucleotide biosynthesis pathway. This chain is Aspartate carbamoyltransferase catalytic subunit, found in Burkholderia multivorans (strain ATCC 17616 / 249).